Consider the following 303-residue polypeptide: UDP-N-acetylenolpyruvoylglucosamine reductase (303 aa).

The 166-residue stretch at 30–195 folds into the FAD-binding PCMH-type domain; the sequence is KTGGPADLLA…LSARFEMAKG (166 aa). R174 is a catalytic residue. S224 serves as the catalytic Proton donor. E294 is an active-site residue.

This sequence belongs to the MurB family. FAD serves as cofactor.

It is found in the cytoplasm. The catalysed reaction is UDP-N-acetyl-alpha-D-muramate + NADP(+) = UDP-N-acetyl-3-O-(1-carboxyvinyl)-alpha-D-glucosamine + NADPH + H(+). The protein operates within cell wall biogenesis; peptidoglycan biosynthesis. Cell wall formation. In Latilactobacillus sakei subsp. sakei (strain 23K) (Lactobacillus sakei subsp. sakei), this protein is UDP-N-acetylenolpyruvoylglucosamine reductase.